A 934-amino-acid chain; its full sequence is Glycine dehydrogenase (decarboxylating) (934 aa).

K687 is modified (N6-(pyridoxal phosphate)lysine).

It belongs to the GcvP family. In terms of assembly, the glycine cleavage system is composed of four proteins: P, T, L and H. It depends on pyridoxal 5'-phosphate as a cofactor.

It catalyses the reaction N(6)-[(R)-lipoyl]-L-lysyl-[glycine-cleavage complex H protein] + glycine + H(+) = N(6)-[(R)-S(8)-aminomethyldihydrolipoyl]-L-lysyl-[glycine-cleavage complex H protein] + CO2. In terms of biological role, the glycine cleavage system catalyzes the degradation of glycine. The P protein binds the alpha-amino group of glycine through its pyridoxal phosphate cofactor; CO(2) is released and the remaining methylamine moiety is then transferred to the lipoamide cofactor of the H protein. This chain is Glycine dehydrogenase (decarboxylating), found in Nocardia farcinica (strain IFM 10152).